The sequence spans 82 residues: Putative Fe(2+) transport protein A (82 aa).

It belongs to the FeoA family.

In terms of biological role, might be involved in Fe(2+) ion uptake. The chain is Putative Fe(2+) transport protein A from Leptolyngbya boryana (Plectonema boryanum).